The following is a 153-amino-acid chain: Large ribosomal subunit protein uL15 (153 aa).

Positions methionine 1–proline 47 are disordered.

This sequence belongs to the universal ribosomal protein uL15 family. In terms of assembly, part of the 50S ribosomal subunit.

In terms of biological role, binds to the 23S rRNA. This is Large ribosomal subunit protein uL15 from Dehalococcoides mccartyi (strain ATCC BAA-2100 / JCM 16839 / KCTC 5957 / BAV1).